Here is a 63-residue protein sequence, read N- to C-terminus: Large ribosomal subunit protein bL32 (63 aa).

Positions 1–27 (MANPKAKMSKSRRDKRRAQFNARTKPA) are disordered. The segment covering 7–18 (KMSKSRRDKRRA) has biased composition (basic residues).

Belongs to the bacterial ribosomal protein bL32 family.

The chain is Large ribosomal subunit protein bL32 from Pelodictyon phaeoclathratiforme (strain DSM 5477 / BU-1).